A 227-amino-acid chain; its full sequence is Orotidine 5'-phosphate decarboxylase (227 aa).

Substrate-binding positions include D8, K30, 59-68 (DLKLYDIPYT), T118, R178, Q187, G207, and R208. The Proton donor role is filled by K61.

This sequence belongs to the OMP decarboxylase family. Type 1 subfamily. Homodimer.

The enzyme catalyses orotidine 5'-phosphate + H(+) = UMP + CO2. It participates in pyrimidine metabolism; UMP biosynthesis via de novo pathway; UMP from orotate: step 2/2. Catalyzes the decarboxylation of orotidine 5'-monophosphate (OMP) to uridine 5'-monophosphate (UMP). In Helicobacter pylori (strain P12), this protein is Orotidine 5'-phosphate decarboxylase.